The primary structure comprises 800 residues: Integrin beta-5 (800 aa).

An N-terminal signal peptide occupies residues 1–24; it reads MPRAPALLFSCLLGLCALVPRLPG. At 25–722 the chain is on the extracellular side; that stretch reads LNICTSGSAT…PECGTAPSAM (698 aa). A PSI domain is found at 27 to 76; it reads ICTSGSATSCEECLLIHPKCAWCFKEDFGSLRSVTSRCDLKANLIRNGCG. Intrachain disulfides connect Cys-28–Cys-46, Cys-36–Cys-463, Cys-39–Cys-64, Cys-49–Cys-75, Cys-202–Cys-211, Cys-259–Cys-300, Cys-401–Cys-413, Cys-433–Cys-461, Cys-465–Cys-484, Cys-476–Cys-487, Cys-489–Cys-498, Cys-500–Cys-530, Cys-513–Cys-528, Cys-522–Cys-533, Cys-535–Cys-548, Cys-550–Cys-571, Cys-555–Cys-569, Cys-563–Cys-574, and Cys-576–Cys-585. In terms of domain architecture, VWFA spans 136 to 378; sequence YPVDLYYLMD…QLIINAYNSI (243 aa). Mg(2+) is bound by residues Ser-147 and Ser-149. Ca(2+) is bound by residues Ser-149, Asp-152, Asp-153, and Asp-184. Ca(2+) is bound by residues Asn-242, Asp-244, Pro-246, and Glu-247. Position 247 (Glu-247) interacts with Mg(2+). Residue Asn-347 is glycosylated (N-linked (GlcNAc...) asparagine). A Ca(2+)-binding site is contributed by Gly-362. I-EGF domains follow at residues 465 to 499, 500 to 549, 550 to 586, and 587 to 626; these read CSAG…TRCE, CQEG…SFCE, CDNF…DNCN, and CSTD…ETCE. An N-linked (GlcNAc...) asparagine glycan is attached at Asn-479. Asn-552 carries N-linked (GlcNAc...) asparagine glycosylation. A glycan (N-linked (GlcNAc...) asparagine) is linked at Asn-586. Cystine bridges form between Cys-587-Cys-610, Cys-594-Cys-608, Cys-602-Cys-613, Cys-615-Cys-625, Cys-628-Cys-631, Cys-635-Cys-683, Cys-641-Cys-662, Cys-644-Cys-658, and Cys-691-Cys-715. N-linked (GlcNAc...) asparagine glycosylation is found at Asn-655 and Asn-706. A helical membrane pass occupies residues 723–743; the sequence is TILLAVVGSILLTGFALLVIW. Over 744-800 the chain is Cytoplasmic; sequence KLLVTIHDRREFAKFQSERSRARYEMASNPLYRKPISTHTVDFTFNKFNKSYNGTVD. Ser-771 bears the Phosphoserine mark.

The protein belongs to the integrin beta chain family. In terms of assembly, heterodimer of an alpha and a beta subunit. Beta-5 (ITGB5) associates with alpha-V (ITGAV). Interacts with MYO10. Interacts with DAB2. Integrin ITGAV:ITGB5 interacts with FBLN5 (via N-terminus). ITGAV:ITGB5 interacts with CCN3. Interacts with tensin TNS3; TNS3 also interacts with PEAK1, thus acting as an adapter molecule to bridge the association of PEAK1 with ITGB5.

The protein resides in the cell membrane. Its function is as follows. Integrin alpha-V/beta-5 (ITGAV:ITGB5) is a receptor for fibronectin. It recognizes the sequence R-G-D in its ligand. The sequence is that of Integrin beta-5 (ITGB5) from Bos taurus (Bovine).